A 237-amino-acid polypeptide reads, in one-letter code: Purine nucleoside phosphorylase DeoD-type (237 aa).

H4 provides a ligand contact to a purine D-ribonucleoside. Phosphate is bound by residues G20, R24, R43, and 87–90 (RVGT). Residues 179 to 181 (EME) and 203 to 204 (SD) contribute to the a purine D-ribonucleoside site. Catalysis depends on D204, which acts as the Proton donor.

It belongs to the PNP/UDP phosphorylase family. Homohexamer; trimer of homodimers.

It carries out the reaction a purine D-ribonucleoside + phosphate = a purine nucleobase + alpha-D-ribose 1-phosphate. The catalysed reaction is a purine 2'-deoxy-D-ribonucleoside + phosphate = a purine nucleobase + 2-deoxy-alpha-D-ribose 1-phosphate. Catalyzes the reversible phosphorolytic breakdown of the N-glycosidic bond in the beta-(deoxy)ribonucleoside molecules, with the formation of the corresponding free purine bases and pentose-1-phosphate. The protein is Purine nucleoside phosphorylase DeoD-type of Exiguobacterium sp. (strain ATCC BAA-1283 / AT1b).